The primary structure comprises 461 residues: Ribonuclease inhibitor (461 aa).

The residue at position 2 (Ser-2) is an N-acetylserine. Positions 2–11 (SLDIQSLDIQ) are 2 X 5 AA tandem repeats of S-L-D-I-Q. 15 LRR repeats span residues 20–48 (WAEL…CKDI), 49–76 (SSAL…VHCV), 77–105 (LQGL…CGVL), 106–133 (SSTL…LQLL), 134–162 (CEGL…CKPL), 163–190 (ASVL…VRVL), 191–219 (CQGL…CRDL), 220–247 (CGIV…MAEL), 248–276 (CPGL…CGDL), 277–304 (CRVL…ARLL), 305–333 (CETL…CSHF), 334–361 (SSVL…VQEL), 362–390 (CQGL…CSSL), 391–418 (AATL…ILQL), and 419–447 (VESV…EDRL). Ser-91 carries the post-translational modification Phosphoserine.

As to quaternary structure, forms high-affinity heterodimers with RNASE1, ANG and RNASE2.

It is found in the cytoplasm. It localises to the nucleus. In terms of biological role, ribonuclease inhibitor which inhibits RNASE1, RNASE2 and angiogenin (ANG). May play a role in redox homeostasis. Required to inhibit the cytotoxic tRNA ribonuclease activity of ANG in the cytoplasm in absence of stress. Relocates to the nucleus in response to stress, relieving inhibition of ANG in the cytoplasm, and inhibiting the angiogenic activity of ANG in the nucleus. This is Ribonuclease inhibitor (RNH1) from Pan troglodytes (Chimpanzee).